The following is a 385-amino-acid chain: Methionine aminopeptidase 1 (385 aa).

The segment at 6–59 (SRVCETEGCSSEAKLQCPTCIKLGIQGSYFCSQECFKGSWASHKLLHKKAKDDK) adopts a C6H2-type zinc-finger fold. Cys9, Cys14, Cys22, Cys25, Cys36, Cys40, His48, and His52 together coordinate Zn(2+). Position 203 (His203) interacts with a protein. Asp220, Asp231, and His294 together coordinate Zn(2+). His301 is an a protein binding site. The Zn(2+) site is built by Glu327 and Glu358.

Belongs to the peptidase M24A family. Methionine aminopeptidase type 1 subfamily. In terms of assembly, associates with the 60S ribosomal subunit of the 80S translational complex. Zn(2+) is required as a cofactor. The cofactor is Co(2+). Mn(2+) serves as cofactor. It depends on Fe(2+) as a cofactor.

It localises to the cytoplasm. The enzyme catalyses Release of N-terminal amino acids, preferentially methionine, from peptides and arylamides.. Functionally, cotranslationally removes the N-terminal methionine from nascent proteins. The N-terminal methionine is often cleaved when the second residue in the primary sequence is small and uncharged (Met-Ala-, Cys, Gly, Pro, Ser, Thr, or Val). In Xenopus tropicalis (Western clawed frog), this protein is Methionine aminopeptidase 1 (metap1).